A 165-amino-acid polypeptide reads, in one-letter code: 3-isopropylmalate dehydratase small subunit (165 aa).

Belongs to the LeuD family. LeuD type 2 subfamily. In terms of assembly, heterodimer of LeuC and LeuD.

The catalysed reaction is (2R,3S)-3-isopropylmalate = (2S)-2-isopropylmalate. It functions in the pathway amino-acid biosynthesis; L-leucine biosynthesis; L-leucine from 3-methyl-2-oxobutanoate: step 2/4. Functionally, catalyzes the isomerization between 2-isopropylmalate and 3-isopropylmalate, via the formation of 2-isopropylmaleate. This Saccharolobus islandicus (strain Y.G.57.14 / Yellowstone #1) (Sulfolobus islandicus) protein is 3-isopropylmalate dehydratase small subunit.